A 1371-amino-acid polypeptide reads, in one-letter code: DNA-directed RNA polymerase subunit beta'' (1371 aa).

Positions 220, 293, 300, and 303 each coordinate Zn(2+).

Belongs to the RNA polymerase beta' chain family. RpoC2 subfamily. In terms of assembly, in plastids the minimal PEP RNA polymerase catalytic core is composed of four subunits: alpha, beta, beta', and beta''. When a (nuclear-encoded) sigma factor is associated with the core the holoenzyme is formed, which can initiate transcription. Zn(2+) is required as a cofactor.

Its subcellular location is the plastid. It is found in the chloroplast. It carries out the reaction RNA(n) + a ribonucleoside 5'-triphosphate = RNA(n+1) + diphosphate. In terms of biological role, DNA-dependent RNA polymerase catalyzes the transcription of DNA into RNA using the four ribonucleoside triphosphates as substrates. This chain is DNA-directed RNA polymerase subunit beta'', found in Lobularia maritima (Sweet alyssum).